A 96-amino-acid polypeptide reads, in one-letter code: uncharacterized protein (96 aa).

Residues Met-1–Arg-18 are compositionally biased toward basic and acidic residues. Residues Met-1 to Gln-96 are disordered. Residues Gln-28–Thr-46 show a composition bias toward polar residues. Residues Thr-70–Gln-96 are compositionally biased toward basic and acidic residues.

This is an uncharacterized protein from Caenorhabditis elegans.